Consider the following 423-residue polypeptide: Kynureninase (423 aa).

Pyridoxal 5'-phosphate is bound by residues Leu-105, Ser-106, 133-136, Asp-218, His-221, and Tyr-243; that span reads FPSD. Lys-244 bears the N6-(pyridoxal phosphate)lysine mark. Positions 273 and 301 each coordinate pyridoxal 5'-phosphate.

It belongs to the kynureninase family. Homodimer. It depends on pyridoxal 5'-phosphate as a cofactor.

It carries out the reaction L-kynurenine + H2O = anthranilate + L-alanine + H(+). It catalyses the reaction 3-hydroxy-L-kynurenine + H2O = 3-hydroxyanthranilate + L-alanine + H(+). It participates in amino-acid degradation; L-kynurenine degradation; L-alanine and anthranilate from L-kynurenine: step 1/1. Its pathway is cofactor biosynthesis; NAD(+) biosynthesis; quinolinate from L-kynurenine: step 2/3. Functionally, catalyzes the cleavage of L-kynurenine (L-Kyn) and L-3-hydroxykynurenine (L-3OHKyn) into anthranilic acid (AA) and 3-hydroxyanthranilic acid (3-OHAA), respectively. The sequence is that of Kynureninase from Xanthomonas euvesicatoria pv. vesicatoria (strain 85-10) (Xanthomonas campestris pv. vesicatoria).